The sequence spans 137 residues: Small ribosomal subunit protein uS12 (137 aa).

3-methylthioaspartic acid is present on Asp-102.

This sequence belongs to the universal ribosomal protein uS12 family. As to quaternary structure, part of the 30S ribosomal subunit. Contacts proteins S8 and S17. May interact with IF1 in the 30S initiation complex.

Functionally, with S4 and S5 plays an important role in translational accuracy. Its function is as follows. Interacts with and stabilizes bases of the 16S rRNA that are involved in tRNA selection in the A site and with the mRNA backbone. Located at the interface of the 30S and 50S subunits, it traverses the body of the 30S subunit contacting proteins on the other side and probably holding the rRNA structure together. The combined cluster of proteins S8, S12 and S17 appears to hold together the shoulder and platform of the 30S subunit. The protein is Small ribosomal subunit protein uS12 of Phytoplasma mali (strain AT).